Here is a 92-residue protein sequence, read N- to C-terminus: Gene 80 protein (92 aa).

The protein is Gene 80 protein (80) of Mycobacterium phage L5 (Mycobacteriophage L5).